A 540-amino-acid chain; its full sequence is 2,3-bisphosphoglycerate-independent phosphoglycerate mutase (540 aa).

Residues aspartate 13 and serine 63 each coordinate Mn(2+). Catalysis depends on serine 63, which acts as the Phosphoserine intermediate. Substrate is bound by residues histidine 124, 154–155 (RD), arginine 186, arginine 192, 262–265 (RPDR), and lysine 356. Mn(2+)-binding residues include aspartate 423, histidine 427, aspartate 464, histidine 465, and histidine 483.

Belongs to the BPG-independent phosphoglycerate mutase family. Monomer. The cofactor is Mn(2+).

It catalyses the reaction (2R)-2-phosphoglycerate = (2R)-3-phosphoglycerate. The protein operates within carbohydrate degradation; glycolysis; pyruvate from D-glyceraldehyde 3-phosphate: step 3/5. In terms of biological role, catalyzes the interconversion of 2-phosphoglycerate and 3-phosphoglycerate. This chain is 2,3-bisphosphoglycerate-independent phosphoglycerate mutase, found in Chloroflexus aurantiacus (strain ATCC 29366 / DSM 635 / J-10-fl).